The chain runs to 617 residues: Proline--tRNA ligase (617 aa).

The protein belongs to the class-II aminoacyl-tRNA synthetase family. ProS type 1 subfamily. As to quaternary structure, homodimer.

The protein localises to the cytoplasm. The catalysed reaction is tRNA(Pro) + L-proline + ATP = L-prolyl-tRNA(Pro) + AMP + diphosphate. Its function is as follows. Catalyzes the attachment of proline to tRNA(Pro) in a two-step reaction: proline is first activated by ATP to form Pro-AMP and then transferred to the acceptor end of tRNA(Pro). As ProRS can inadvertently accommodate and process non-cognate amino acids such as alanine and cysteine, to avoid such errors it has two additional distinct editing activities against alanine. One activity is designated as 'pretransfer' editing and involves the tRNA(Pro)-independent hydrolysis of activated Ala-AMP. The other activity is designated 'posttransfer' editing and involves deacylation of mischarged Ala-tRNA(Pro). The misacylated Cys-tRNA(Pro) is not edited by ProRS. This chain is Proline--tRNA ligase, found in Streptococcus agalactiae serotype V (strain ATCC BAA-611 / 2603 V/R).